The primary structure comprises 627 residues: Translation factor GUF1, mitochondrial (627 aa).

Residues 1 to 16 constitute a mitochondrion transit peptide; that stretch reads MSLAWSAGRAWSRQSY. The tr-type G domain maps to 40–221; the sequence is ERYRNFCIVA…AVIERIPHPV (182 aa). Residues 49–56, 114–118, and 168–171 contribute to the GTP site; these read AHIDHGKS, DTPGH, and NKID.

It belongs to the TRAFAC class translation factor GTPase superfamily. Classic translation factor GTPase family. LepA subfamily.

Its subcellular location is the mitochondrion inner membrane. The catalysed reaction is GTP + H2O = GDP + phosphate + H(+). Its function is as follows. Promotes mitochondrial protein synthesis. May act as a fidelity factor of the translation reaction, by catalyzing a one-codon backward translocation of tRNAs on improperly translocated ribosomes. Binds to mitochondrial ribosomes in a GTP-dependent manner. This is Translation factor GUF1, mitochondrial from Fusarium vanettenii (strain ATCC MYA-4622 / CBS 123669 / FGSC 9596 / NRRL 45880 / 77-13-4) (Fusarium solani subsp. pisi).